Consider the following 724-residue polypeptide: uncharacterized protein (724 aa).

Disordered regions lie at residues 1–23 (MEDREMSTKPESISSRPPEIPDN), 166–477 (PDGY…PPRD), 496–517 (EAHDSGTNTVVPLPDQPEAHGP), and 532–691 (DHPI…PALS). Composition is skewed to polar residues over residues 227 to 245 (VSQSSFSPRTEGGPSTVNQ) and 270 to 296 (STTLGPAMNTFQRTTSPPVMHVTTSDA). Over residues 304–322 (TRDHDRYGNGRGPDTDRLE) the composition is skewed to basic and acidic residues. The span at 403-413 (PSSSHSETPNM) shows a compositional bias: polar residues. Basic and acidic residues-rich tracts occupy residues 550-560 (RNHEFTEDKRL) and 637-657 (LRHDSRVGTPKHLENVHDLAA). A compositionally biased stretch (low complexity) spans 682 to 691 (RLAAASPALS).

This is an uncharacterized protein from Neurospora crassa (strain ATCC 24698 / 74-OR23-1A / CBS 708.71 / DSM 1257 / FGSC 987).